The following is a 111-amino-acid chain: Resistin-like beta (111 aa).

An N-terminal signal peptide occupies residues 1 to 23 (MGPSSCLLLILIPLLQLINPGST). Disulfide bonds link C55–C108, C67–C107, C76–C93, C78–C95, and C82–C97.

This sequence belongs to the resistin/FIZZ family. Homodimer; disulfide-linked. In terms of tissue distribution, expressed only in the gastrointestinal tract, particularly the colon.

It localises to the secreted. Probable hormone. The chain is Resistin-like beta (RETNLB) from Homo sapiens (Human).